Reading from the N-terminus, the 113-residue chain is DNA-binding protein Mevan_1162 (113 aa).

Basic and acidic residues predominate over residues 1-12; it reads MDPEEIKQKKLQ. The tract at residues 1 to 22 is disordered; the sequence is MDPEEIKQKKLQEMQAKAQDPE.

Belongs to the PDCD5 family.

This Methanococcus vannielii (strain ATCC 35089 / DSM 1224 / JCM 13029 / OCM 148 / SB) protein is DNA-binding protein Mevan_1162.